The primary structure comprises 199 residues: Imidazole glycerol phosphate synthase subunit HisH 2 (199 aa).

The region spanning 1–199 is the Glutamine amidotransferase type-1 domain; it reads MIAVIDVSGN…NNFLSLESTC (199 aa). Cysteine 76 serves as the catalytic Nucleophile. Residues histidine 177 and glutamate 179 contribute to the active site.

As to quaternary structure, heterodimer of HisH and HisF.

The protein localises to the cytoplasm. The catalysed reaction is 5-[(5-phospho-1-deoxy-D-ribulos-1-ylimino)methylamino]-1-(5-phospho-beta-D-ribosyl)imidazole-4-carboxamide + L-glutamine = D-erythro-1-(imidazol-4-yl)glycerol 3-phosphate + 5-amino-1-(5-phospho-beta-D-ribosyl)imidazole-4-carboxamide + L-glutamate + H(+). It catalyses the reaction L-glutamine + H2O = L-glutamate + NH4(+). Its pathway is amino-acid biosynthesis; L-histidine biosynthesis; L-histidine from 5-phospho-alpha-D-ribose 1-diphosphate: step 5/9. IGPS catalyzes the conversion of PRFAR and glutamine to IGP, AICAR and glutamate. The HisH subunit provides the glutamine amidotransferase activity that produces the ammonia necessary to HisF for the synthesis of IGP and AICAR. The chain is Imidazole glycerol phosphate synthase subunit HisH 2 from Legionella pneumophila (strain Paris).